A 152-amino-acid chain; its full sequence is FMN reductase (NADH) RutF (152 aa).

Belongs to the non-flavoprotein flavin reductase family. RutF subfamily.

It catalyses the reaction FMNH2 + NAD(+) = FMN + NADH + 2 H(+). Its function is as follows. Catalyzes the reduction of FMN to FMNH2 which is used to reduce pyrimidine by RutA via the Rut pathway. The chain is FMN reductase (NADH) RutF from Shigella flexneri.